A 339-amino-acid polypeptide reads, in one-letter code: Anthranilate phosphoribosyltransferase (339 aa).

Residues glycine 81, 84-85 (GD), serine 89, 91-94 (NVST), 109-117 (KHGNRALSS), and alanine 121 each bind 5-phospho-alpha-D-ribose 1-diphosphate. Glycine 81 is an anthranilate binding site. Serine 93 is a binding site for Mg(2+). Asparagine 112 is an anthranilate binding site. An anthranilate-binding site is contributed by arginine 167. Aspartate 226 and glutamate 227 together coordinate Mg(2+).

The protein belongs to the anthranilate phosphoribosyltransferase family. Homodimer. The cofactor is Mg(2+).

It catalyses the reaction N-(5-phospho-beta-D-ribosyl)anthranilate + diphosphate = 5-phospho-alpha-D-ribose 1-diphosphate + anthranilate. It functions in the pathway amino-acid biosynthesis; L-tryptophan biosynthesis; L-tryptophan from chorismate: step 2/5. Its function is as follows. Catalyzes the transfer of the phosphoribosyl group of 5-phosphorylribose-1-pyrophosphate (PRPP) to anthranilate to yield N-(5'-phosphoribosyl)-anthranilate (PRA). This is Anthranilate phosphoribosyltransferase from Rhodopseudomonas palustris (strain BisB18).